We begin with the raw amino-acid sequence, 419 residues long: Serine/threonine-protein kinase Kist (419 aa).

The region spanning 23–303 is the Protein kinase domain; it reads WQVQSRLGSG…PAEMALCSPF (281 aa). Residues 29 to 37 and lysine 54 each bind ATP; that span reads LGSGSSASV. The active-site Proton acceptor is aspartate 158. The 83-residue stretch at 323 to 405 folds into the RRM domain; sequence LRLLNVLDDD…GKFVVATFYP (83 aa).

Belongs to the protein kinase superfamily. Ser/Thr protein kinase family. In terms of assembly, interacts with PAM and CDKN1B/p27Kip1. Interacts with stathmin.

The protein resides in the nucleus. The enzyme catalyses L-seryl-[protein] + ATP = O-phospho-L-seryl-[protein] + ADP + H(+). It catalyses the reaction L-threonyl-[protein] + ATP = O-phospho-L-threonyl-[protein] + ADP + H(+). Its function is as follows. Upon serum stimulation, phosphorylates CDKN1B/p27Kip1, thus controlling CDKN1B subcellular location and cell cycle progression in G1 phase. May be involved in trafficking and/or processing of RNA. The protein is Serine/threonine-protein kinase Kist (Uhmk1) of Mus musculus (Mouse).